Here is a 473-residue protein sequence, read N- to C-terminus: Photosystem II CP43 reaction center protein (473 aa).

Positions Met-1–Glu-14 are excised as a propeptide. At Thr-15 the chain carries N-acetylthreonine. Phosphothreonine is present on Thr-15. A run of 5 helical transmembrane segments spans residues Leu-69–Ala-93, Leu-134–Asn-155, Lys-178–Thr-200, Lys-255–Ser-275, and Trp-291–Ala-312. Glu-367 serves as a coordination point for [CaMn4O5] cluster. A helical membrane pass occupies residues Arg-447–Pro-471.

This sequence belongs to the PsbB/PsbC family. PsbC subfamily. PSII is composed of 1 copy each of membrane proteins PsbA, PsbB, PsbC, PsbD, PsbE, PsbF, PsbH, PsbI, PsbJ, PsbK, PsbL, PsbM, PsbT, PsbX, PsbY, PsbZ, Psb30/Ycf12, at least 3 peripheral proteins of the oxygen-evolving complex and a large number of cofactors. It forms dimeric complexes. It depends on Binds multiple chlorophylls and provides some of the ligands for the Ca-4Mn-5O cluster of the oxygen-evolving complex. It may also provide a ligand for a Cl- that is required for oxygen evolution. PSII binds additional chlorophylls, carotenoids and specific lipids. as a cofactor.

It is found in the plastid. The protein resides in the chloroplast thylakoid membrane. Its function is as follows. One of the components of the core complex of photosystem II (PSII). It binds chlorophyll and helps catalyze the primary light-induced photochemical processes of PSII. PSII is a light-driven water:plastoquinone oxidoreductase, using light energy to abstract electrons from H(2)O, generating O(2) and a proton gradient subsequently used for ATP formation. The protein is Photosystem II CP43 reaction center protein of Oenothera argillicola (Appalachian evening primrose).